We begin with the raw amino-acid sequence, 1521 residues long: Protein dispatched homolog 1 (1521 aa).

Residues 1–10 (MAVISGSDSV) show a composition bias toward polar residues. The interval 1 to 55 (MAVISGSDSVLLSNGSISTSTSNPSPLSPSDGDLPAQHLGPRETPRTKASPNGCL) is disordered. Residues 11–35 (LLSNGSISTSTSNPSPLSPSDGDLP) show a composition bias toward low complexity. N-linked (GlcNAc...) asparagine glycosylation is found at Asn14 and Asn58. The helical transmembrane segment at 189-209 (VVVLGMCTLLIVVCALVGVLV) threads the bilayer. Asn390 carries N-linked (GlcNAc...) asparagine glycosylation. Residues 485–657 (GIEFGIKHSL…VTWLPAVIVL (173 aa)) form the SSD domain. 3 helical membrane-spanning segments follow: residues 499 to 519 (LLMDTVYPAIAIAIVLLIMCV), 524 to 544 (MFITLMTMFAIISSLIVSYFL), and 548 to 568 (VFNFEFFPFMNLTALIILVGI). Asn581 is a glycosylation site (N-linked (GlcNAc...) asparagine). 8 consecutive transmembrane segments (helical) span residues 603-623 (AALSMFVTSFTTAAAFYANYV), 637-657 (GTAILVNYVLMVTWLPAVIVL), 717-737 (YLWLIWFLALTVGGAYIVCVN), 986-1006 (MGLSVAVAFSVMLLTTWNIII), 1008-1028 (LYAIVSIAGTIFVTVGSLVLL), 1038-1058 (VTISVAVGLSVDFAVHYGVAY), 1081-1101 (IAMAALTTFVAGAMMMPSTVL), and 1109-1129 (FMMLVMCVSWAFATFFFQCLC). Composition is skewed to polar residues over residues 1355-1364 (QENLGRTSTH) and 1418-1428 (TKSKVSGLPNQ). Residues 1355–1440 (QENLGRTSTH…KEEKQVEPSL (86 aa)) form a disordered region. Residue Asn1455 is glycosylated (N-linked (GlcNAc...) asparagine).

It belongs to the dispatched family. Interacts with SHH; via the cholesterol anchor of the dually lipid-modified SHH (ShhNp).

It localises to the membrane. Functions in hedgehog (Hh) signaling. Regulates the release and extracellular accumulation of cholesterol-modified hedgehog proteins and is hence required for effective production of the Hh signal. Synergizes with SCUBE2 to cause an increase in SHH secretion. The sequence is that of Protein dispatched homolog 1 (Disp1) from Mus musculus (Mouse).